The chain runs to 209 residues: Kynurenine formamidase (209 aa).

Residue tryptophan 19 participates in substrate binding. Positions 49, 53, and 55 each coordinate Zn(2+). Histidine 59 acts as the Proton donor/acceptor in catalysis. 2 residues coordinate Zn(2+): histidine 160 and glutamate 172.

It belongs to the Cyclase 1 superfamily. KynB family. Homodimer. Zn(2+) serves as cofactor.

The catalysed reaction is N-formyl-L-kynurenine + H2O = L-kynurenine + formate + H(+). It participates in amino-acid degradation; L-tryptophan degradation via kynurenine pathway; L-kynurenine from L-tryptophan: step 2/2. Its function is as follows. Catalyzes the hydrolysis of N-formyl-L-kynurenine to L-kynurenine, the second step in the kynurenine pathway of tryptophan degradation. This chain is Kynurenine formamidase, found in Ralstonia pickettii (strain 12J).